We begin with the raw amino-acid sequence, 156 residues long: Small ribosomal subunit protein uS7 (156 aa).

Belongs to the universal ribosomal protein uS7 family. In terms of assembly, part of the 30S ribosomal subunit. Contacts proteins S9 and S11.

One of the primary rRNA binding proteins, it binds directly to 16S rRNA where it nucleates assembly of the head domain of the 30S subunit. Is located at the subunit interface close to the decoding center, probably blocks exit of the E-site tRNA. This is Small ribosomal subunit protein uS7 from Streptococcus equi subsp. equi (strain 4047).